A 294-amino-acid chain; its full sequence is MSIALDMDASAKMRKQPGSSGWSTSSTPSCSVIVPAFRENLNLRPLVTRLSSAFASQSSSELANTEIIIVDDNSRDGSVETVSALQSEGYNVRIIVRTSERGLSSAVVRGFREARGQRMICMDADLQHPPEAVPSLLLALNGQKSFVLGTRYGVGVSMDKDWPLHRRIISSGARMLARPLTSASDPMSGFFGITKHSFHTADHHINAQGFKIALDLLVKSGVHSTDIAEVPFSFGLRQEGESKLDGKVMFKYLQQLVELYRFRFGTVPIVFVLIVLLVLALYIWSHVLAPMLGA.

The tract at residues 1–27 is disordered; sequence MSIALDMDASAKMRKQPGSSGWSTSST. Residues 1-263 are Cytoplasmic-facing; the sequence is MSIALDMDAS…QQLVELYRFR (263 aa). A compositionally biased stretch (low complexity) spans 17-27; sequence PGSSGWSTSST. Residues Pro-35, Glu-39, Val-70, Asp-72, Asp-123, Ala-124, Asp-125, Gln-127, Arg-151, Lys-211, Arg-237, and Lys-243 each contribute to the GDP-alpha-D-mannose site. Asp-125 and Gln-127 together coordinate Mg(2+). 2 residues coordinate Mn(2+): Asp-125 and Gln-127. The helical transmembrane segment at 264 to 284 threads the bilayer; that stretch reads FGTVPIVFVLIVLLVLALYIW. The Lumenal segment spans residues 285–294; it reads SHVLAPMLGA.

The protein belongs to the glycosyltransferase 2 family. The cofactor is Mg(2+). It depends on Mn(2+) as a cofactor. Ca(2+) is required as a cofactor.

It localises to the endoplasmic reticulum membrane. The enzyme catalyses a di-trans,poly-cis-dolichyl phosphate + GDP-alpha-D-mannose = a di-trans,poly-cis-dolichyl beta-D-mannosyl phosphate + GDP. It participates in protein modification; protein glycosylation. Functionally, transfers mannose from GDP-mannose to dolichol monophosphate to form dolichol phosphate mannose (Dol-P-Man) which is the mannosyl donor in pathways leading to N-glycosylation, glycosyl phosphatidylinositol membrane anchoring, and O-mannosylation of proteins. The protein is Dolichol-phosphate mannosyltransferase (DPM1) of Mycosarcoma maydis (Corn smut fungus).